Consider the following 462-residue polypeptide: Squalene synthase LSS (462 aa).

Residues arginine 48 and arginine 73 each coordinate NADP(+). Mg(2+) contacts are provided by aspartate 76, glutamate 79, and aspartate 80. NADP(+)-binding residues include arginine 214, lysine 314, and arginine 316. 2 helical membrane-spanning segments follow: residues 399–419 (LVLV…PLLW) and 436–456 (LGLP…YQVF).

The protein belongs to the phytoene/squalene synthase family. Mg(2+) serves as cofactor.

Its subcellular location is the membrane. The catalysed reaction is 2 (2E,6E)-farnesyl diphosphate + NADH + H(+) = squalene + 2 diphosphate + NAD(+). The enzyme catalyses 2 (2E,6E)-farnesyl diphosphate + NADPH + H(+) = squalene + 2 diphosphate + NADP(+). Converts farnesyl diphosphate (FPP) into squalene, a precursor for sterol biosynthesis in eukaryotes. The sequence is that of Squalene synthase LSS from Botryococcus braunii (Green alga).